The sequence spans 527 residues: Probable feruloyl esterase B (527 aa).

An N-terminal signal peptide occupies residues 1-19 (MALLRHLLPVLTVGSAVQS). 2 disulfides stabilise this stretch: Cys31-Cys76 and Cys65-Cys115. Residues Asn56, Asn86, and Asn139 are each glycosylated (N-linked (GlcNAc...) asparagine). Disulfide bonds link Cys188–Cys442, Cys257–Cys274, Cys283–Cys292, and Cys504–Cys526. Residue Ser189 is the Acyl-ester intermediate of the active site. Positions 258, 261, 263, 265, and 267 each coordinate Ca(2+). The N-linked (GlcNAc...) asparagine glycan is linked to Asn277. N-linked (GlcNAc...) asparagine glycans are attached at residues Asn312 and Asn356. Residues Asp401 and His441 each act as charge relay system in the active site.

The protein belongs to the tannase family.

It localises to the secreted. The catalysed reaction is feruloyl-polysaccharide + H2O = ferulate + polysaccharide.. In terms of biological role, involved in degradation of plant cell walls. Hydrolyzes the feruloyl-arabinose ester bond in arabinoxylans as well as the feruloyl-galactose and feruloyl-arabinose ester bonds in pectin. The polypeptide is Probable feruloyl esterase B (faeB) (Emericella nidulans (strain FGSC A4 / ATCC 38163 / CBS 112.46 / NRRL 194 / M139) (Aspergillus nidulans)).